A 68-amino-acid chain; its full sequence is ATP synthase F(0) complex subunit 8 (68 aa).

A helical membrane pass occupies residues 8–24 (VWPTMIAPMLLTLFLIT). Residue lysine 54 is modified to N6-acetyllysine; alternate. Lysine 54 is modified (N6-succinyllysine; alternate). Position 57 is an N6-acetyllysine (lysine 57).

Belongs to the ATPase protein 8 family. As to quaternary structure, component of the ATP synthase complex composed at least of ATP5F1A/subunit alpha, ATP5F1B/subunit beta, ATP5MC1/subunit c (homooctomer), MT-ATP6/subunit a, MT-ATP8/subunit 8, ATP5ME/subunit e, ATP5MF/subunit f, ATP5MG/subunit g, ATP5MK/subunit k, ATP5MJ/subunit j, ATP5F1C/subunit gamma, ATP5F1D/subunit delta, ATP5F1E/subunit epsilon, ATP5PF/subunit F6, ATP5PB/subunit b, ATP5PD/subunit d, ATP5PO/subunit OSCP. ATP synthase complex consists of a soluble F(1) head domain (subunits alpha(3) and beta(3)) - the catalytic core - and a membrane F(0) domain - the membrane proton channel (subunits c, a, 8, e, f, g, k and j). These two domains are linked by a central stalk (subunits gamma, delta, and epsilon) rotating inside the F1 region and a stationary peripheral stalk (subunits F6, b, d, and OSCP). Interacts with PRICKLE3.

It is found in the mitochondrion membrane. Functionally, subunit 8, of the mitochondrial membrane ATP synthase complex (F(1)F(0) ATP synthase or Complex V) that produces ATP from ADP in the presence of a proton gradient across the membrane which is generated by electron transport complexes of the respiratory chain. ATP synthase complex consist of a soluble F(1) head domain - the catalytic core - and a membrane F(1) domain - the membrane proton channel. These two domains are linked by a central stalk rotating inside the F(1) region and a stationary peripheral stalk. During catalysis, ATP synthesis in the catalytic domain of F(1) is coupled via a rotary mechanism of the central stalk subunits to proton translocation. In vivo, can only synthesize ATP although its ATP hydrolase activity can be activated artificially in vitro. Part of the complex F(0) domain. In Gorilla gorilla gorilla (Western lowland gorilla), this protein is ATP synthase F(0) complex subunit 8.